The chain runs to 287 residues: UPF0725 protein At1g19060 (287 aa).

Belongs to the UPF0725 (EMB2204) family.

The sequence is that of UPF0725 protein At1g19060 from Arabidopsis thaliana (Mouse-ear cress).